A 1414-amino-acid chain; its full sequence is DNA-directed RNA polymerase subunit beta' (1414 aa).

The Zn(2+) site is built by C70, C72, C85, and C88. Mg(2+)-binding residues include D460, D462, and D464. 4 residues coordinate Zn(2+): C819, C893, C900, and C903. Residues 1391-1414 (AEEAFDFGTPSAPAEEPQQHPAAE) are disordered. A compositionally biased stretch (low complexity) spans 1400–1414 (PSAPAEEPQQHPAAE).

It belongs to the RNA polymerase beta' chain family. In terms of assembly, the RNAP catalytic core consists of 2 alpha, 1 beta, 1 beta' and 1 omega subunit. When a sigma factor is associated with the core the holoenzyme is formed, which can initiate transcription. Mg(2+) is required as a cofactor. The cofactor is Zn(2+).

It catalyses the reaction RNA(n) + a ribonucleoside 5'-triphosphate = RNA(n+1) + diphosphate. In terms of biological role, DNA-dependent RNA polymerase catalyzes the transcription of DNA into RNA using the four ribonucleoside triphosphates as substrates. This chain is DNA-directed RNA polymerase subunit beta', found in Burkholderia lata (strain ATCC 17760 / DSM 23089 / LMG 22485 / NCIMB 9086 / R18194 / 383).